Reading from the N-terminus, the 859-residue chain is DNA mismatch repair protein MutS (859 aa).

618 to 625 (GPNMGGKS) provides a ligand contact to ATP.

The protein belongs to the DNA mismatch repair MutS family.

Functionally, this protein is involved in the repair of mismatches in DNA. It is possible that it carries out the mismatch recognition step. This protein has a weak ATPase activity. This Shewanella sediminis (strain HAW-EB3) protein is DNA mismatch repair protein MutS.